Reading from the N-terminus, the 67-residue chain is Probable Sec-independent protein translocase protein TatE (67 aa).

A helical transmembrane segment spans residues 4-21 (ISITKLLVVAALVVLLFG).

It belongs to the TatA/E family. TatE subfamily.

It localises to the cell inner membrane. In terms of biological role, part of the twin-arginine translocation (Tat) system that transports large folded proteins containing a characteristic twin-arginine motif in their signal peptide across membranes. TatE shares overlapping functions with TatA. In Enterobacter cloacae subsp. cloacae (strain ATCC 13047 / DSM 30054 / NBRC 13535 / NCTC 10005 / WDCM 00083 / NCDC 279-56), this protein is Probable Sec-independent protein translocase protein TatE.